We begin with the raw amino-acid sequence, 155 residues long: Small ribosomal subunit protein uS7 (155 aa).

This sequence belongs to the universal ribosomal protein uS7 family. As to quaternary structure, part of the 30S ribosomal subunit. Contacts proteins S9 and S11.

In terms of biological role, one of the primary rRNA binding proteins, it binds directly to 16S rRNA where it nucleates assembly of the head domain of the 30S subunit. Is located at the subunit interface close to the decoding center, probably blocks exit of the E-site tRNA. The protein is Small ribosomal subunit protein uS7 of Thermotoga maritima (strain ATCC 43589 / DSM 3109 / JCM 10099 / NBRC 100826 / MSB8).